A 421-amino-acid chain; its full sequence is UDP-N-acetylglucosamine 1-carboxyvinyltransferase (421 aa).

Phosphoenolpyruvate is bound at residue 22-23 (KN). Arginine 95 contributes to the UDP-N-acetyl-alpha-D-glucosamine binding site. Catalysis depends on cysteine 119, which acts as the Proton donor. Cysteine 119 bears the 2-(S-cysteinyl)pyruvic acid O-phosphothioketal mark. Residues 124–128 (RPVDQ), aspartate 309, and isoleucine 331 contribute to the UDP-N-acetyl-alpha-D-glucosamine site.

It belongs to the EPSP synthase family. MurA subfamily.

The protein resides in the cytoplasm. It catalyses the reaction phosphoenolpyruvate + UDP-N-acetyl-alpha-D-glucosamine = UDP-N-acetyl-3-O-(1-carboxyvinyl)-alpha-D-glucosamine + phosphate. Its pathway is cell wall biogenesis; peptidoglycan biosynthesis. In terms of biological role, cell wall formation. Adds enolpyruvyl to UDP-N-acetylglucosamine. This chain is UDP-N-acetylglucosamine 1-carboxyvinyltransferase, found in Leptothrix cholodnii (strain ATCC 51168 / LMG 8142 / SP-6) (Leptothrix discophora (strain SP-6)).